A 374-amino-acid chain; its full sequence is 5-hydroxytryptamine receptor 1D (374 aa).

The Extracellular portion of the chain corresponds to 1–35; that stretch reads MSPPNQSLEGLPQEASNRSLNVTGAWDPEVLQALR. Residues N5, N17, and N21 are each glycosylated (N-linked (GlcNAc...) asparagine). Residues 36–61 traverse the membrane as a helical segment; it reads ISLVVVLSVITLATVLSNAFVLTTIL. The Cytoplasmic portion of the chain corresponds to 62–72; it reads LTKKLHTPANY. A helical membrane pass occupies residues 73–94; that stretch reads LIGSLATTDLLVSILVMPISIA. The Extracellular segment spans residues 95 to 106; it reads YTTTRTWNFGQI. The helical transmembrane segment at 107–131 threads the bilayer; sequence LCDIWVSSDITCCTASILHLCVIAL. An intrachain disulfide couples C108 to C185. Serotonin-binding residues include D115 and C119. The short motif at 132–134 is the DRY motif; important for ligand-induced conformation changes element; it reads DRY. Over 132–151 the chain is Cytoplasmic; it reads DRYWAITDALEYSKRRTAGH. Residues 152–173 traverse the membrane as a helical segment; sequence AAAMIAAVWIISICISIPPLFW. Residues 174 to 191 lie on the Extracellular side of the membrane; it reads RQATAHEEMSDCLVNTSQ. Residues 192–215 traverse the membrane as a helical segment; that stretch reads ISYTIYSTCGAFYIPSILLIILYG. Residues 216 to 297 are Cytoplasmic-facing; sequence RIYVAARSRI…ISAARERKAT (82 aa). The chain crosses the membrane as a helical span at residues 298-323; the sequence is KTLGIILGAFIICWLPFFVVSLVLPI. Serotonin is bound at residue S318. Topologically, residues 324–332 are extracellular; sequence CRDSCWIHP. The helical transmembrane segment at 333–356 threads the bilayer; that stretch reads ALFDFFTWLGYLNSLINPVIYTVF. The short motif at 349 to 353 is the NPxxY motif; important for ligand-induced conformation changes and signaling element; that stretch reads NPVIY. At 357–374 the chain is on the cytoplasmic side; that stretch reads NEDFRQAFQKVVHFRKIS.

The protein belongs to the G-protein coupled receptor 1 family. Homodimer. Heterodimer with HTR1B. As to expression, detected in the motor column in spinal cord, and in several cranial motor nuclei, including nucleus ambiguous, oculomotoris, trochelaris and abducens. Detected in gamma motor neurons in the lumbar spinal cord. Detected in proprioceptive sensory neurons in dorsal root ganglia.

The protein resides in the cell membrane. In terms of biological role, G-protein coupled receptor for 5-hydroxytryptamine (serotonin). Also functions as a receptor for ergot alkaloid derivatives, various anxiolytic and antidepressant drugs and other psychoactive substances. Ligand binding causes a conformation change that triggers signaling via guanine nucleotide-binding proteins (G proteins) and modulates the activity of downstream effectors, such as adenylate cyclase. HTR1D is coupled to G(i)/G(o) G alpha proteins and mediates inhibitory neurotransmission by inhibiting adenylate cyclase activity. Regulates the release of 5-hydroxytryptamine in the brain, and thereby affects neural activity. May also play a role in regulating the release of other neurotransmitters. May play a role in vasoconstriction. This Mus musculus (Mouse) protein is 5-hydroxytryptamine receptor 1D (Htr1d).